Here is a 189-residue protein sequence, read N- to C-terminus: WASH complex subunit homolog 3 (189 aa).

Positions 35–74 form a coiled coil; that stretch reads MTEMLNNFGNKMEDILEKAEQSLDTADRKLRLMESKLAGM. Disordered stretches follow at residues 76-101 and 150-189; these read LEDKSTTATPSSAPEIDEIHESNPSS and SEGVDPSILKRGDEPSRPQAQTSRNYESSGESTASFSDSD. A compositionally biased stretch (basic and acidic residues) spans 150 to 165; that stretch reads SEGVDPSILKRGDEPS. A compositionally biased stretch (polar residues) spans 167 to 189; sequence PQAQTSRNYESSGESTASFSDSD. T182 bears the Phosphothreonine mark.

The protein belongs to the CCDC53 family. As to quaternary structure, probable component of the WASH complex. Component of the DHIC (ddl-1-containing hsf-1 inhibitory complex), which contains at least ddl-1, ddl-2, hsb-1 and hsf-1. Within the complex, interacts with ddl-2. Within the complex, interacts with hsb-1. Within the complex, interacts with hsf-1. Formation of the DHIC may be dependent upon the Insulin/IGF-1-like signaling (IIS) mediated pathway. Phosphorylated. Phosphorylation on Thr-182 may promote DHIC complex dissociation and consequently the activation of heat-shock transcription factor hsf-1. Phosphorylation is modulated by the Insulin/IGF-1-like signaling (IIS) mediated pathway. In terms of tissue distribution, expressed in pharynx, intestine, body wall muscles, vulva muscles, spermatheca, and several head and tail neurons.

Functionally, acts as a component of the WASH core complex that functions as a nucleation-promoting factor (NPF) at the surface of endosomes, where it recruits and activates the Arp2/3 complex to induce actin polymerization, playing a key role in the fission of tubules that serve as transport intermediates during endosome sorting. Acts as a component of the DHIC (ddl-1-containing hsf-1 inhibitory complex) which modulates lifespan by sequestering the heat-shock transcription factor hsf-1 to negatively regulate its binding to DNA and its transcriptional activity. In Caenorhabditis elegans, this protein is WASH complex subunit homolog 3 (ddl-1).